Consider the following 675-residue polypeptide: Potassium-transporting ATPase ATP-binding subunit (675 aa).

Helical transmembrane passes span Ile-34–Ile-54, Leu-65–Phe-85, Ile-216–Leu-236, and Leu-245–Gly-265. The 4-aspartylphosphate intermediate role is filled by Asp-304. Residues Asp-341, Glu-345, Phe-372–Ser-379, and Lys-390 contribute to the ATP site. Mg(2+) contacts are provided by Asp-513 and Asp-517. Helical transmembrane passes span Ala-569 to Met-591, Ala-611 to Met-631, and Ile-644 to Ile-664.

This sequence belongs to the cation transport ATPase (P-type) (TC 3.A.3) family. Type IA subfamily. The system is composed of three essential subunits: KdpA, KdpB and KdpC.

The protein resides in the cell membrane. It catalyses the reaction K(+)(out) + ATP + H2O = K(+)(in) + ADP + phosphate + H(+). Functionally, part of the high-affinity ATP-driven potassium transport (or Kdp) system, which catalyzes the hydrolysis of ATP coupled with the electrogenic transport of potassium into the cytoplasm. This subunit is responsible for energy coupling to the transport system and for the release of the potassium ions to the cytoplasm. The chain is Potassium-transporting ATPase ATP-binding subunit from Staphylococcus aureus (strain bovine RF122 / ET3-1).